Reading from the N-terminus, the 424-residue chain is Serine--tRNA ligase (424 aa).

231–233 (TAE) contacts L-serine. Residue 262–264 (RSE) coordinates ATP. Residue E285 participates in L-serine binding. Residue 349–352 (EISS) coordinates ATP. S385 provides a ligand contact to L-serine.

It belongs to the class-II aminoacyl-tRNA synthetase family. Type-1 seryl-tRNA synthetase subfamily. Homodimer. The tRNA molecule binds across the dimer.

The protein localises to the cytoplasm. It catalyses the reaction tRNA(Ser) + L-serine + ATP = L-seryl-tRNA(Ser) + AMP + diphosphate + H(+). It carries out the reaction tRNA(Sec) + L-serine + ATP = L-seryl-tRNA(Sec) + AMP + diphosphate + H(+). It participates in aminoacyl-tRNA biosynthesis; selenocysteinyl-tRNA(Sec) biosynthesis; L-seryl-tRNA(Sec) from L-serine and tRNA(Sec): step 1/1. Catalyzes the attachment of serine to tRNA(Ser). Is also able to aminoacylate tRNA(Sec) with serine, to form the misacylated tRNA L-seryl-tRNA(Sec), which will be further converted into selenocysteinyl-tRNA(Sec). This is Serine--tRNA ligase from Bacillus cytotoxicus (strain DSM 22905 / CIP 110041 / 391-98 / NVH 391-98).